A 77-amino-acid polypeptide reads, in one-letter code: Apelin (77 aa).

The N-terminal stretch at 1–22 is a signal peptide; that stretch reads MNLRLCVQALLLLWLSLTAVCG. A propeptide spanning residues 23-41 is cleaved from the precursor; the sequence is VPLMLPPDGTGLEEGSMRY. Positions 46–77 are disordered; it reads RTSRTGPGAWQGGRRKFRRQRPRLSHKGPMPF. The span at 58–71 shows a compositional bias: basic residues; the sequence is GRRKFRRQRPRLSH.

Belongs to the apelin family. In terms of processing, several active peptides may be produced by proteolytic processing of the peptide precursor. Expressed in extraembryonic visceral endoderm and in the primitive streak at 6.5 and 7.5 dpc. Expressed in the anterior visceral yolk sac at 8.25 dpc. Expressed weakly in the embryonic heart at 11.5 dpc. Expressed in the adult heart. Expressed in endothelial cells and cardiomyocytes and weakly expressed in fibroblasts.

It is found in the secreted. The protein localises to the extracellular space. In terms of biological role, peptide hormone that functions as endogenous ligand for the G-protein-coupled apelin receptor (APLNR/APJ). Functions as a balanced agonist activating both G(i) protein pathway and beta-arrestin pathway of APLNR. Downstream G proteins activation, apelin can inhibit cAMP production and activate key intracellular effectors such as ERKs. On the other hand, APLNR activation induces beta-arrestin recruitment to the membrane leading to desensitization and internalization of the receptor. Apelin also blunts mechanical stretch-induced hypertrophic induction from APLNR. Apelin-36 dissociates more hardly than (pyroglu)apelin-13 from APLNR. Involved in the regulation of cardiac precursor cell movements during gastrulation and heart morphogenesis. Has an inhibitory effect on cytokine production in response to T-cell receptor/CD3 cross-linking; the oral intake of apelin in the colostrum and the milk might therefore modulate immune responses in neonates. Plays a role in early coronary blood vessels formation. Mediates myocardial contractility in an ERK1/2-dependent manner. May also have a role in the central control of body fluid homeostasis by influencing vasopressin release and drinking behavior. The protein is Apelin of Mus musculus (Mouse).